Reading from the N-terminus, the 230-residue chain is Cytidylate kinase (230 aa).

12–20 (GPSGAGKST) provides a ligand contact to ATP.

The protein belongs to the cytidylate kinase family. Type 1 subfamily.

It is found in the cytoplasm. The enzyme catalyses CMP + ATP = CDP + ADP. The catalysed reaction is dCMP + ATP = dCDP + ADP. This chain is Cytidylate kinase, found in Corynebacterium diphtheriae (strain ATCC 700971 / NCTC 13129 / Biotype gravis).